Consider the following 103-residue polypeptide: Large ribosomal subunit protein bL21 (103 aa).

The protein belongs to the bacterial ribosomal protein bL21 family. In terms of assembly, part of the 50S ribosomal subunit. Contacts protein L20.

This protein binds to 23S rRNA in the presence of protein L20. The chain is Large ribosomal subunit protein bL21 from Bordetella parapertussis (strain 12822 / ATCC BAA-587 / NCTC 13253).